The sequence spans 890 residues: Alanine--tRNA ligase (890 aa).

The Zn(2+) site is built by His-567, His-571, Cys-680, and His-684.

The protein belongs to the class-II aminoacyl-tRNA synthetase family. It depends on Zn(2+) as a cofactor.

It is found in the cytoplasm. The enzyme catalyses tRNA(Ala) + L-alanine + ATP = L-alanyl-tRNA(Ala) + AMP + diphosphate. Its function is as follows. Catalyzes the attachment of alanine to tRNA(Ala) in a two-step reaction: alanine is first activated by ATP to form Ala-AMP and then transferred to the acceptor end of tRNA(Ala). Also edits incorrectly charged Ser-tRNA(Ala) and Gly-tRNA(Ala) via its editing domain. This is Alanine--tRNA ligase from Ruegeria pomeroyi (strain ATCC 700808 / DSM 15171 / DSS-3) (Silicibacter pomeroyi).